We begin with the raw amino-acid sequence, 457 residues long: Oxygen-independent coproporphyrinogen III oxidase (457 aa).

One can recognise a Radical SAM core domain in the interval 47-280 (RYPERPLSLY…QETIVSLTQA (234 aa)). Residue Tyr56 coordinates S-adenosyl-L-methionine. [4Fe-4S] cluster contacts are provided by Cys62 and Cys66. Position 68 (Phe68) interacts with S-adenosyl-L-methionine. [4Fe-4S] cluster is bound at residue Cys69. S-adenosyl-L-methionine-binding positions include Gly112, 113 to 114 (GT), Glu145, Gln172, Arg184, Asp209, Ala243, and Ile329.

Belongs to the anaerobic coproporphyrinogen-III oxidase family. In terms of assembly, monomer. It depends on [4Fe-4S] cluster as a cofactor.

The protein localises to the cytoplasm. It carries out the reaction coproporphyrinogen III + 2 S-adenosyl-L-methionine = protoporphyrinogen IX + 2 5'-deoxyadenosine + 2 L-methionine + 2 CO2. The protein operates within porphyrin-containing compound metabolism; protoporphyrin-IX biosynthesis; protoporphyrinogen-IX from coproporphyrinogen-III (AdoMet route): step 1/1. Its function is as follows. Involved in the heme biosynthesis. Catalyzes the anaerobic oxidative decarboxylation of propionate groups of rings A and B of coproporphyrinogen III to yield the vinyl groups in protoporphyrinogen IX. This is Oxygen-independent coproporphyrinogen III oxidase (hemN) from Salmonella typhi.